The primary structure comprises 347 residues: S-adenosylmethionine:tRNA ribosyltransferase-isomerase (347 aa).

It belongs to the QueA family. In terms of assembly, monomer.

Its subcellular location is the cytoplasm. It catalyses the reaction 7-aminomethyl-7-carbaguanosine(34) in tRNA + S-adenosyl-L-methionine = epoxyqueuosine(34) in tRNA + adenine + L-methionine + 2 H(+). It functions in the pathway tRNA modification; tRNA-queuosine biosynthesis. Functionally, transfers and isomerizes the ribose moiety from AdoMet to the 7-aminomethyl group of 7-deazaguanine (preQ1-tRNA) to give epoxyqueuosine (oQ-tRNA). The sequence is that of S-adenosylmethionine:tRNA ribosyltransferase-isomerase from Xylella fastidiosa (strain M23).